The following is a 197-amino-acid chain: Glycerol-3-phosphate acyltransferase (197 aa).

Transmembrane regions (helical) follow at residues 1-21 (MTAL…GLLV), 69-89 (LPML…AVVG), 110-130 (VMLF…LVVL), and 152-172 (VFFT…SFIF).

It belongs to the PlsY family. Probably interacts with PlsX.

Its subcellular location is the cell membrane. The enzyme catalyses an acyl phosphate + sn-glycerol 3-phosphate = a 1-acyl-sn-glycero-3-phosphate + phosphate. Its pathway is lipid metabolism; phospholipid metabolism. Catalyzes the transfer of an acyl group from acyl-phosphate (acyl-PO(4)) to glycerol-3-phosphate (G3P) to form lysophosphatidic acid (LPA). This enzyme utilizes acyl-phosphate as fatty acyl donor, but not acyl-CoA or acyl-ACP. This chain is Glycerol-3-phosphate acyltransferase, found in Geobacillus kaustophilus (strain HTA426).